A 280-amino-acid chain; its full sequence is Tryptophan synthase alpha chain (280 aa).

Catalysis depends on proton acceptor residues Glu49 and Asp60.

Belongs to the TrpA family. In terms of assembly, tetramer of two alpha and two beta chains.

The catalysed reaction is (1S,2R)-1-C-(indol-3-yl)glycerol 3-phosphate + L-serine = D-glyceraldehyde 3-phosphate + L-tryptophan + H2O. It participates in amino-acid biosynthesis; L-tryptophan biosynthesis; L-tryptophan from chorismate: step 5/5. Functionally, the alpha subunit is responsible for the aldol cleavage of indoleglycerol phosphate to indole and glyceraldehyde 3-phosphate. In Corynebacterium glutamicum (strain ATCC 13032 / DSM 20300 / JCM 1318 / BCRC 11384 / CCUG 27702 / LMG 3730 / NBRC 12168 / NCIMB 10025 / NRRL B-2784 / 534), this protein is Tryptophan synthase alpha chain.